We begin with the raw amino-acid sequence, 304 residues long: Nucleotide-binding protein RHA1_ro07174 (304 aa).

Residue 24–31 participates in ATP binding; the sequence is GLSGAGLQ. 75–78 is a GTP binding site; sequence DVRS.

This sequence belongs to the RapZ-like family.

Displays ATPase and GTPase activities. This Rhodococcus jostii (strain RHA1) protein is Nucleotide-binding protein RHA1_ro07174.